The primary structure comprises 272 residues: Dermonecrotic toxin LspaSicTox-alphaII1 (272 aa).

The active site involves His-5. Residues Glu-25 and Asp-27 each contribute to the Mg(2+) site. His-41 (nucleophile) is an active-site residue. 2 cysteine pairs are disulfide-bonded: Cys-45–Cys-51 and Cys-47–Cys-190. Position 85 (Asp-85) interacts with Mg(2+).

Belongs to the arthropod phospholipase D family. Class II subfamily. Mg(2+) serves as cofactor. Expressed by the venom gland.

Its subcellular location is the secreted. The catalysed reaction is an N-(acyl)-sphingosylphosphocholine = an N-(acyl)-sphingosyl-1,3-cyclic phosphate + choline. The enzyme catalyses an N-(acyl)-sphingosylphosphoethanolamine = an N-(acyl)-sphingosyl-1,3-cyclic phosphate + ethanolamine. It catalyses the reaction a 1-acyl-sn-glycero-3-phosphocholine = a 1-acyl-sn-glycero-2,3-cyclic phosphate + choline. It carries out the reaction a 1-acyl-sn-glycero-3-phosphoethanolamine = a 1-acyl-sn-glycero-2,3-cyclic phosphate + ethanolamine. In terms of biological role, dermonecrotic toxins cleave the phosphodiester linkage between the phosphate and headgroup of certain phospholipids (sphingolipid and lysolipid substrates), forming an alcohol (often choline) and a cyclic phosphate. This toxin acts on sphingomyelin (SM). It may also act on ceramide phosphoethanolamine (CPE), lysophosphatidylcholine (LPC) and lysophosphatidylethanolamine (LPE), but not on lysophosphatidylserine (LPS), and lysophosphatidylglycerol (LPG). It acts by transphosphatidylation, releasing exclusively cyclic phosphate products as second products. Induces dermonecrosis, hemolysis, increased vascular permeability, edema, inflammatory response, and platelet aggregation. This chain is Dermonecrotic toxin LspaSicTox-alphaII1, found in Loxosceles spadicea (Recluse spider).